We begin with the raw amino-acid sequence, 103 residues long: UPF0473 protein SGO_2040 (103 aa).

This sequence belongs to the UPF0473 family.

This chain is UPF0473 protein SGO_2040, found in Streptococcus gordonii (strain Challis / ATCC 35105 / BCRC 15272 / CH1 / DL1 / V288).